We begin with the raw amino-acid sequence, 304 residues long: Recombination-associated protein RdgC (304 aa).

This sequence belongs to the RdgC family.

It localises to the cytoplasm. It is found in the nucleoid. In terms of biological role, may be involved in recombination. The protein is Recombination-associated protein RdgC of Shewanella sp. (strain ANA-3).